The chain runs to 388 residues: uncharacterized protein (388 aa).

This is an uncharacterized protein from Klebsiella pneumoniae.